Consider the following 313-residue polypeptide: Ribosomal RNA small subunit methyltransferase H (313 aa).

S-adenosyl-L-methionine is bound by residues 35–37 (GGH), Asp55, Phe80, Asp102, and Gln109.

This sequence belongs to the methyltransferase superfamily. RsmH family.

Its subcellular location is the cytoplasm. It catalyses the reaction cytidine(1402) in 16S rRNA + S-adenosyl-L-methionine = N(4)-methylcytidine(1402) in 16S rRNA + S-adenosyl-L-homocysteine + H(+). In terms of biological role, specifically methylates the N4 position of cytidine in position 1402 (C1402) of 16S rRNA. In Shewanella violacea (strain JCM 10179 / CIP 106290 / LMG 19151 / DSS12), this protein is Ribosomal RNA small subunit methyltransferase H.